A 20-amino-acid polypeptide reads, in one-letter code: 26 kDa protein (20 aa).

This chain is 26 kDa protein, found in Bacillus cereus.